A 92-amino-acid chain; its full sequence is Protamine-2 (92 aa).

Residues 1–76 are disordered; sequence MVRCRVRSPS…RRACRHRRHR (76 aa). Residues 7-20 show a composition bias toward low complexity; the sequence is RSPSESPQQGSGQQ. Serine 8 and serine 10 each carry phosphoserine. Residues 21-36 show a composition bias toward basic and acidic residues; it reads RENERQDQDQELRPED. Residues 42 to 76 show a composition bias toward basic residues; it reads RTHRGRYHYRHRSHTRRRRSCRRRRRRACRHRRHR.

The protein belongs to the protamine P2 family. Interacts with TDRP. In terms of processing, proteolytic processing into mature chains is required for histone eviction during spermatogenesis. Transition proteins (TNP1 and TNP2) are required for processing. In terms of tissue distribution, testis.

Its subcellular location is the nucleus. It is found in the chromosome. Functionally, protamines substitute for histones in the chromatin of sperm during the haploid phase of spermatogenesis. They compact sperm DNA into a highly condensed, stable and inactive complex. The sequence is that of Protamine-2 (PRM2) from Sus scrofa (Pig).